The following is a 154-amino-acid chain: Ribosome maturation factor RimP (154 aa).

It belongs to the RimP family.

It localises to the cytoplasm. Its function is as follows. Required for maturation of 30S ribosomal subunits. This is Ribosome maturation factor RimP from Clostridium kluyveri (strain ATCC 8527 / DSM 555 / NBRC 12016 / NCIMB 10680 / K1).